The following is a 92-amino-acid chain: Small ribosomal subunit protein uS19 (92 aa).

This sequence belongs to the universal ribosomal protein uS19 family.

Its function is as follows. Protein S19 forms a complex with S13 that binds strongly to the 16S ribosomal RNA. This Vibrio atlanticus (strain LGP32) (Vibrio splendidus (strain Mel32)) protein is Small ribosomal subunit protein uS19.